The sequence spans 306 residues: Small ribosomal subunit protein uS2 (306 aa).

N-acetylserine is present on Ser-2. 2 laminin-binding regions span residues Ile-161–Arg-180 and Arg-205–Gly-229. 5 [DE]-W-[ST] repeats span residues Glu-230–Thr-232, Asp-245–Ser-247, Asp-276–Ser-278, Asp-286–Ser-288, and Glu-304–Ser-306. The laminin-binding stretch occupies residues Glu-242–Ser-306. Positions Pro-261–Ser-306 are disordered. The span at Trp-277–Ser-306 shows a compositional bias: polar residues.

This sequence belongs to the universal ribosomal protein uS2 family. In terms of assembly, monomer (37LRP) and homodimer (67LR). Component of the small ribosomal subunit. Mature ribosomes consist of a small (40S) and a large (60S) subunit. The 40S subunit contains about 33 different proteins and 1 molecule of RNA (18S). The 60S subunit contains about 49 different proteins and 3 molecules of RNA (28S, 5.8S and 5S). Interacts with rps21. Interacts with several laminins including at least lamb1. Interacts with mdk. In terms of processing, acylated. Acylation may be a prerequisite for conversion of the monomeric 37 kDa laminin receptor precursor (37LRP) to the mature dimeric 67 kDa laminin receptor (67LR), and may provide a mechanism for membrane association. Post-translationally, cleaved by stromelysin-3 (ST3) at the cell surface. Cleavage by stromelysin-3 may be a mechanism to alter cell-extracellular matrix interactions.

The protein localises to the cell membrane. It localises to the cytoplasm. Its subcellular location is the nucleus. In terms of biological role, required for the assembly and/or stability of the 40S ribosomal subunit. Required for the processing of the 20S rRNA-precursor to mature 18S rRNA in a late step of the maturation of 40S ribosomal subunits. Also functions as a cell surface receptor for laminin. Plays a role in cell adhesion to the basement membrane and in the consequent activation of signaling transduction pathways. May play a role in cell fate determination and tissue morphogenesis. This chain is Small ribosomal subunit protein uS2 (rpsa), found in Xenopus tropicalis (Western clawed frog).